The chain runs to 220 residues: Large ribosomal subunit protein uL3 (220 aa).

Positions 130-156 (AIKRHGQSRGPMSHGSHFHRAPGSVGM) are disordered.

It belongs to the universal ribosomal protein uL3 family. Part of the 50S ribosomal subunit. Forms a cluster with proteins L14 and L19.

Its function is as follows. One of the primary rRNA binding proteins, it binds directly near the 3'-end of the 23S rRNA, where it nucleates assembly of the 50S subunit. The chain is Large ribosomal subunit protein uL3 from Staphylococcus aureus (strain Mu3 / ATCC 700698).